Consider the following 366-residue polypeptide: tRNA/tmRNA (uracil-C(5))-methyltransferase (366 aa).

Q190, Y218, N223, E239, and D299 together coordinate S-adenosyl-L-methionine. C324 (nucleophile) is an active-site residue. E358 functions as the Proton acceptor in the catalytic mechanism.

Belongs to the class I-like SAM-binding methyltransferase superfamily. RNA M5U methyltransferase family. TrmA subfamily.

The enzyme catalyses uridine(54) in tRNA + S-adenosyl-L-methionine = 5-methyluridine(54) in tRNA + S-adenosyl-L-homocysteine + H(+). It carries out the reaction uridine(341) in tmRNA + S-adenosyl-L-methionine = 5-methyluridine(341) in tmRNA + S-adenosyl-L-homocysteine + H(+). Its function is as follows. Dual-specificity methyltransferase that catalyzes the formation of 5-methyluridine at position 54 (m5U54) in all tRNAs, and that of position 341 (m5U341) in tmRNA (transfer-mRNA). The protein is tRNA/tmRNA (uracil-C(5))-methyltransferase of Salmonella heidelberg (strain SL476).